The chain runs to 420 residues: Threonine aspartase 1 (420 aa).

Residues 1 to 25 (MIMEKGMNSGEGLPSRSSQASAAKV) form a disordered region. Thr-234 acts as the Nucleophile in catalysis.

This sequence belongs to the Ntn-hydrolase family. In terms of assembly, intramolecular proteolysis generates 2 subunits, alpha and beta, which reassemble through a non-covalent association to form the fully active enzyme.

Functionally, protease responsible for KMT2A/MLL1 and KMT2D/MLL2 processing and activation. Through substrate activation, it controls the expression of HOXA genes, and the expression of key cell cycle regulators including CCNA1, CCNB1, CCNE1 and CDKN2A. The sequence is that of Threonine aspartase 1 (Tasp1) from Mus musculus (Mouse).